The primary structure comprises 590 residues: Arginine--tRNA ligase (590 aa).

Positions A134 to H144 match the 'HIGH' region motif.

Belongs to the class-I aminoacyl-tRNA synthetase family. Monomer.

It is found in the cytoplasm. The enzyme catalyses tRNA(Arg) + L-arginine + ATP = L-arginyl-tRNA(Arg) + AMP + diphosphate. In Beijerinckia indica subsp. indica (strain ATCC 9039 / DSM 1715 / NCIMB 8712), this protein is Arginine--tRNA ligase.